Here is a 69-residue protein sequence, read N- to C-terminus: MFLLQFAQRVKDLSMVYEWDECNARRGYILKMLGAIDVAVAVASVPTLFVVTAISHDLMSALATPQVDR.

A helical transmembrane segment spans residues 32-54 (MLGAIDVAVAVASVPTLFVVTAI).

The protein resides in the membrane. This is an uncharacterized protein from Sinorhizobium fredii (strain NBRC 101917 / NGR234).